A 150-amino-acid polypeptide reads, in one-letter code: UPF0178 protein Shewmr4_1560 (150 aa).

Belongs to the UPF0178 family.

The polypeptide is UPF0178 protein Shewmr4_1560 (Shewanella sp. (strain MR-4)).